The primary structure comprises 1090 residues: Leucine--tRNA ligase, cytoplasmic (1090 aa).

Ser2 bears the N-acetylserine mark. The 'HIGH' region signature appears at 66–76 (PYMNGVMHAGH). Thr142 is subject to Phosphothreonine. Residues 729–733 (KMSKS) carry the 'KMSKS' region motif. Position 732 (Lys732) interacts with ATP.

The protein belongs to the class-I aminoacyl-tRNA synthetase family.

The protein resides in the cytoplasm. It catalyses the reaction tRNA(Leu) + L-leucine + ATP = L-leucyl-tRNA(Leu) + AMP + diphosphate. This chain is Leucine--tRNA ligase, cytoplasmic (CDC60), found in Saccharomyces cerevisiae (strain ATCC 204508 / S288c) (Baker's yeast).